Here is a 129-residue protein sequence, read N- to C-terminus: Flagellar assembly factor FliW (129 aa).

The protein belongs to the FliW family. In terms of assembly, interacts with translational regulator CsrA and flagellin(s).

The protein resides in the cytoplasm. Its function is as follows. Acts as an anti-CsrA protein, binds CsrA and prevents it from repressing translation of its target genes, one of which is flagellin. Binds to flagellin and participates in the assembly of the flagellum. This Campylobacter jejuni subsp. doylei (strain ATCC BAA-1458 / RM4099 / 269.97) protein is Flagellar assembly factor FliW.